Here is a 409-residue protein sequence, read N- to C-terminus: Forkhead box protein A2 (409 aa).

Positions 150–241 (AKPPYSYISL…GNMFENGCYL (92 aa)) form a DNA-binding region, fork-head. A compositionally biased stretch (basic and acidic residues) spans 250–262 (DKKLSKDPSRKTS). A disordered region spans residues 250–315 (DKKLSKDPSR…AASPTSQAQH (66 aa)). Low complexity predominate over residues 263-286 (EGGSNSSSESCNGNESPHSNSSSN).

It localises to the nucleus. May play a crucial role in specification of both the axial mesendoderm and the ventral nervous system. The chain is Forkhead box protein A2 (foxa2) from Danio rerio (Zebrafish).